The sequence spans 56 residues: Large ribosomal subunit protein bL32 (56 aa).

Positions 1–34 are disordered; that stretch reads MAVQQNKKSRSKRGMRRSHDSLSTAQLSVDATSG. The span at 7-16 shows a compositional bias: basic residues; that stretch reads KKSRSKRGMR. Positions 21–31 are enriched in polar residues; it reads SLSTAQLSVDA.

It belongs to the bacterial ribosomal protein bL32 family.

This is Large ribosomal subunit protein bL32 from Shewanella frigidimarina (strain NCIMB 400).